Reading from the N-terminus, the 358-residue chain is Aminomethyltransferase (358 aa).

The protein belongs to the GcvT family. In terms of assembly, the glycine cleavage system is composed of four proteins: P, T, L and H.

The enzyme catalyses N(6)-[(R)-S(8)-aminomethyldihydrolipoyl]-L-lysyl-[protein] + (6S)-5,6,7,8-tetrahydrofolate = N(6)-[(R)-dihydrolipoyl]-L-lysyl-[protein] + (6R)-5,10-methylene-5,6,7,8-tetrahydrofolate + NH4(+). The glycine cleavage system catalyzes the degradation of glycine. The polypeptide is Aminomethyltransferase (Francisella tularensis subsp. mediasiatica (strain FSC147)).